We begin with the raw amino-acid sequence, 104 residues long: N(4)-acetylcytidine amidohydrolase (104 aa).

In terms of domain architecture, ASCH spans 6-94 (ITFFQRFQND…IAEIYPNQTQ (89 aa)). Lysine 21 (proton acceptor) is an active-site residue. Catalysis depends on threonine 24, which acts as the Nucleophile. Catalysis depends on glutamate 74, which acts as the Proton donor.

It belongs to the N(4)-acetylcytidine amidohydrolase family.

It catalyses the reaction N(4)-acetylcytidine + H2O = cytidine + acetate + H(+). The catalysed reaction is N(4)-acetyl-2'-deoxycytidine + H2O = 2'-deoxycytidine + acetate + H(+). It carries out the reaction N(4)-acetylcytosine + H2O = cytosine + acetate + H(+). Functionally, catalyzes the hydrolysis of N(4)-acetylcytidine (ac4C). The sequence is that of N(4)-acetylcytidine amidohydrolase (yqfB) from Salmonella dublin (strain CT_02021853).